A 533-amino-acid polypeptide reads, in one-letter code: Lanosterol 14-alpha demethylase (533 aa).

Residue C472 coordinates heme.

It belongs to the cytochrome P450 family. Requires heme as cofactor.

Its subcellular location is the membrane. The catalysed reaction is a 14alpha-methyl steroid + 3 reduced [NADPH--hemoprotein reductase] + 3 O2 = a Delta(14) steroid + formate + 3 oxidized [NADPH--hemoprotein reductase] + 4 H2O + 4 H(+). It carries out the reaction a 14alpha-methyl steroid + reduced [NADPH--hemoprotein reductase] + O2 = a 14alpha-hydroxymethyl steroid + oxidized [NADPH--hemoprotein reductase] + H2O + H(+). The enzyme catalyses a 14alpha-hydroxymethyl steroid + reduced [NADPH--hemoprotein reductase] + O2 = a 14alpha-formyl steroid + oxidized [NADPH--hemoprotein reductase] + 2 H2O + H(+). It catalyses the reaction a 14alpha-formyl steroid + reduced [NADPH--hemoprotein reductase] + O2 = a Delta(14) steroid + formate + oxidized [NADPH--hemoprotein reductase] + H2O + 2 H(+). The catalysed reaction is lanosterol + 3 reduced [NADPH--hemoprotein reductase] + 3 O2 = 4,4-dimethyl-5alpha-cholesta-8,14,24-trien-3beta-ol + formate + 3 oxidized [NADPH--hemoprotein reductase] + 4 H2O + 4 H(+). It carries out the reaction lanosterol + reduced [NADPH--hemoprotein reductase] + O2 = 32-hydroxylanosterol + oxidized [NADPH--hemoprotein reductase] + H2O + H(+). The enzyme catalyses 32-hydroxylanosterol + reduced [NADPH--hemoprotein reductase] + O2 = 32-oxolanosterol + oxidized [NADPH--hemoprotein reductase] + 2 H2O + H(+). It catalyses the reaction 32-oxolanosterol + reduced [NADPH--hemoprotein reductase] + O2 = 4,4-dimethyl-5alpha-cholesta-8,14,24-trien-3beta-ol + formate + oxidized [NADPH--hemoprotein reductase] + H2O + 2 H(+). The catalysed reaction is eburicol + 3 reduced [NADPH--hemoprotein reductase] + 3 O2 = 14-demethyleburicol + formate + 3 oxidized [NADPH--hemoprotein reductase] + 4 H2O + 4 H(+). It carries out the reaction eburicol + reduced [NADPH--hemoprotein reductase] + O2 = 32-hydroxyeburicol + oxidized [NADPH--hemoprotein reductase] + H2O + H(+). The enzyme catalyses 32-hydroxyeburicol + reduced [NADPH--hemoprotein reductase] + O2 = 32-oxoeburicol + oxidized [NADPH--hemoprotein reductase] + 2 H2O + H(+). It catalyses the reaction 32-oxoeburicol + reduced [NADPH--hemoprotein reductase] + O2 = 14-demethyleburicol + formate + oxidized [NADPH--hemoprotein reductase] + H2O + 2 H(+). It functions in the pathway steroid biosynthesis; zymosterol biosynthesis; zymosterol from lanosterol: step 1/6. Sterol 14alpha-demethylase that plays a critical role in the third module of ergosterol biosynthesis pathway, being ergosterol the major sterol component in fungal membranes that participates in a variety of functions. The third module or late pathway involves the ergosterol synthesis itself through consecutive reactions that mainly occur in the endoplasmic reticulum (ER) membrane. In filamentous fungi, during the initial step of this module, lanosterol (lanosta-8,24-dien-3beta-ol) can be metabolized to eburicol. Sterol 14alpha-demethylase catalyzes the three-step oxidative removal of the 14alpha-methyl group (C-32) of both these sterols in the form of formate, and converts eburicol and lanosterol to 14-demethyleburicol (4,4,24-trimethylergosta-8,14,24(28)-trienol) and 4,4-dimethyl-5alpha-cholesta-8,14,24-trien-3beta-ol, respectively, which are further metabolized by other enzymes in the pathway to ergosterol. Can also use substrates not intrinsic to fungi, such as 24,25-dihydrolanosterol (DHL), producing 4,4-dimethyl-8,14-cholestadien-3-beta-ol, but at lower rates than the endogenous substrates. The polypeptide is Lanosterol 14-alpha demethylase (ERG11) (Candida glabrata (strain ATCC 2001 / BCRC 20586 / JCM 3761 / NBRC 0622 / NRRL Y-65 / CBS 138) (Yeast)).